Consider the following 623-residue polypeptide: Dictomallein-5 (623 aa).

A signal peptide spans 1–21 (MKIFIIKIILVLFNYVLLSYS). Residues 174–435 (PNVGQDYTLK…QNYFKNSIYY (262 aa)) enclose the Peptidase M66 domain. Position 327 (His-327) interacts with Zn(2+). Glu-328 is a catalytic residue. His-331 and His-337 together coordinate Zn(2+).

This sequence belongs to the dictomallein family. Zn(2+) serves as cofactor.

It is found in the secreted. This is Dictomallein-5 (dtmlE) from Dictyostelium discoideum (Social amoeba).